A 160-amino-acid polypeptide reads, in one-letter code: MGVFNYETEATSVIPAARLFKAFILDGDNLFPKVAPQAISSVENIEGNGGPGTIKKISFPEGFPFKYVKDRVDEVDHTNFKYSYSVIEGGPVGDTLEKISNEIKIVATPNGGSILKINNKYHTKGDHEVKAEQIKASKEMGETLLRAVESYLLAHSDAYN.

Lys55, Tyr82, Tyr84, and Asn101 together coordinate brassinolide. Hydrophobic ligand pocket stretches follow at residues Lys116–Asn118 and Gln133–Gly141.

The protein belongs to the BetVI family. As to expression, pollen.

The protein resides in the cytoplasm. May be a general steroid carrier protein. The polypeptide is Major pollen allergen Bet v 1-J (Betula pendula (European white birch)).